We begin with the raw amino-acid sequence, 281 residues long: UDP-N-acetylenolpyruvoylglucosamine reductase (281 aa).

The 164-residue stretch at 17-180 (VGGKAKKLII…LSATFKFDNG (164 aa)) folds into the FAD-binding PCMH-type domain. Residue R159 is part of the active site. S206 functions as the Proton donor in the catalytic mechanism. The active site involves E276.

This sequence belongs to the MurB family. It depends on FAD as a cofactor.

The protein resides in the cytoplasm. The enzyme catalyses UDP-N-acetyl-alpha-D-muramate + NADP(+) = UDP-N-acetyl-3-O-(1-carboxyvinyl)-alpha-D-glucosamine + NADPH + H(+). Its pathway is cell wall biogenesis; peptidoglycan biosynthesis. Functionally, cell wall formation. This is UDP-N-acetylenolpyruvoylglucosamine reductase from Fusobacterium nucleatum subsp. nucleatum (strain ATCC 25586 / DSM 15643 / BCRC 10681 / CIP 101130 / JCM 8532 / KCTC 2640 / LMG 13131 / VPI 4355).